The primary structure comprises 239 residues: Myogenic factor 6 (239 aa).

Residues 28-59 are disordered; it reads PGVSPLYEGNDSPLSPGQDPVPSETGCESSGE. The region spanning 92–143 is the bHLH domain; that stretch reads DRRKAATLRERRRLKKINEAFDALKKKTVPNPNQRLPKVEILRSAINYIEKL. Residues 182–196 are compositionally biased toward polar residues; it reads CQSWQENPDHSSSQM. Residues 182–239 are disordered; it reads CQSWQENPDHSSSQMAGHREGAVLESSESSSLRRLSSIVDSISTEEPKARCPSQISEK. Residues 204–223 show a composition bias toward low complexity; the sequence is VLESSESSSLRRLSSIVDSI.

In terms of assembly, efficient DNA binding requires dimerization with another bHLH protein.

The protein resides in the nucleus. Involved in muscle differentiation (myogenic factor). Induces fibroblasts to differentiate into myoblasts. Probable sequence specific DNA-binding protein. The sequence is that of Myogenic factor 6 (myf6) from Danio rerio (Zebrafish).